The chain runs to 418 residues: Delta(14)-sterol reductase TM7SF2 (418 aa).

The next 6 membrane-spanning stretches (helical) occupy residues F13 to L35, A62 to A81, G102 to S124, M129 to L148, F255 to F277, and W287 to F304. NADP(+)-binding positions include K311, R315, L338, W343, and N350–Y351. The helical transmembrane segment at L355–L377 threads the bilayer. NADP(+) is bound by residues D390, C394–Y398, and Y405.

It belongs to the ERG4/ERG24 family. In terms of tissue distribution, highly expressed in liver and brain.

It localises to the microsome membrane. The protein resides in the endoplasmic reticulum membrane. The catalysed reaction is 4,4-dimethyl-5alpha-cholesta-8,24-dien-3beta-ol + NADP(+) = 4,4-dimethyl-5alpha-cholesta-8,14,24-trien-3beta-ol + NADPH + H(+). It catalyses the reaction 5alpha-cholest-8,14-dien-3beta-ol + NADPH + H(+) = 5alpha-cholest-8-en-3beta-ol + NADP(+). The enzyme catalyses 4,4-dimethyl-8,14-cholestadien-3beta-ol + NADPH + H(+) = 4,4-dimethyl-5alpha-cholest-8-en-3beta-ol + NADP(+). The protein operates within steroid biosynthesis; cholesterol biosynthesis. Catalyzes the reduction of the C14-unsaturated bond of lanosterol, as part of the metabolic pathway leading to cholesterol biosynthesis. The protein is Delta(14)-sterol reductase TM7SF2 (TM7SF2) of Bos taurus (Bovine).